A 214-amino-acid chain; its full sequence is MSKPPPKPAKPGQVKVFRALFTFDPRTPDELYFEEGDILYISDTSDTNWWKGTCRGRTGLIPSNYVAEQAETIDHPMHEAAKRGNLSWLRECVENKVGINGLDKAGNTALYWACHGGHKDVVELLLNQPSVELNQQNKLGDTVLHAAAWKGYSDIVEMLLDKNARTDIRNNENKLALEMATNAQCASLLKRKQGTNVTRTLSNAEEYLDDDDSD.

The SH3 domain maps to 12–71 (GQVKVFRALFTFDPRTPDELYFEEGDILYISDTSDTNWWKGTCRGRTGLIPSNYVAEQAE). 3 ANK repeats span residues 72–101 (TIDH…GING), 105–135 (AGNT…ELNQ), and 139–168 (LGDT…RTDI).

In terms of tissue distribution, ubiquitously expressed.

The protein localises to the cytoplasm. Functionally, induces bone resorption, acting probably through a signaling cascade which results in the secretion of factor(s) enhancing osteoclast formation and activity. The chain is Osteoclast-stimulating factor 1 (ostf1) from Monopterus albus (Swamp eel).